The chain runs to 72 residues: Antitoxin VapB11 (72 aa).

In terms of biological role, antitoxin component of a type II toxin-antitoxin (TA) system. The sequence is that of Antitoxin VapB11 (vapB11) from Mycobacterium tuberculosis (strain CDC 1551 / Oshkosh).